The chain runs to 623 residues: Zinc finger protein 131 (623 aa).

One can recognise a BTB domain in the interval 34 to 98 (TDITLIVDGH…TYTAKLMIQG (65 aa)). The short motif at 137–148 (TGKNEAKKRKIA) is the Nuclear localization signal 1 element. C2H2-type zinc fingers lie at residues 261–283 (FHCEKCNRSFKLFYHFKEHMKSH), 288–311 (FKCEICNKRYLRESAWKQHLNCYH), and 328–350 (HVCQYCEKQFDHFGHFKEHLRKH). Residues lysine 289 and lysine 295 each participate in a glycyl lysine isopeptide (Lys-Gly) (interchain with G-Cter in SUMO2) cross-link. Residues 317-328 (VSKKQRTGKKIH) carry the Nuclear localization signal 2 motif. The C2H2-type 4; degenerate zinc-finger motif lies at 356 to 381 (FECPNCHERFARNSTLKCHLTACQTG). C2H2-type zinc fingers lie at residues 392 to 414 (YECQVCNSVFNSWDQFKDHLVIH) and 420 to 443 (NHCTLCDLWFMQGNELRRHLSDAH). The segment covering 573–617 (NQEERESSQADAAEAAREDHEDAEDLETKPTVDSEAEKAENEDRT) has biased composition (basic and acidic residues). The tract at residues 573–623 (NQEERESSQADAAEAAREDHEDAEDLETKPTVDSEAEKAENEDRTALPVLE) is disordered. Residue lysine 601 forms a Glycyl lysine isopeptide (Lys-Gly) (interchain with G-Cter in SUMO) linkage.

The protein belongs to the krueppel C2H2-type zinc-finger protein family. In terms of processing, monosumoylated at Lys-601 by CBX4 and UHRF2. Sumoylation may potentiate ZNF131 inhibition of estrogen signaling. Sumoylation does not interfere with ubiquitination. Ubiquitinated. Predominant expression is found in different brain areas such as the occipital and temporal lobe, the nucleus caudatus, hippocampus, and the cerebellum as well as in testis and thymus.

The protein resides in the nucleus. Plays a role during development and organogenesis as well as in the function of the adult central nervous system. May be involved in transcriptional regulation as a repressor of ESR1/ER-alpha signaling. In Homo sapiens (Human), this protein is Zinc finger protein 131 (ZNF131).